The chain runs to 257 residues: Phosphate import ATP-binding protein PstB (257 aa).

The 242-residue stretch at 5–246 folds into the ABC transporter domain; sequence LEIKDLTAFY…EVIFTSPKNE (242 aa). 37–44 is an ATP binding site; sequence GPSGCGKS.

The protein belongs to the ABC transporter superfamily. Phosphate importer (TC 3.A.1.7) family. The complex is composed of two ATP-binding proteins (PstB), two transmembrane proteins (PstC and PstA) and a solute-binding protein (PstS).

The protein resides in the cell membrane. It catalyses the reaction phosphate(out) + ATP + H2O = ADP + 2 phosphate(in) + H(+). Part of the ABC transporter complex PstSACB involved in phosphate import. Responsible for energy coupling to the transport system. The sequence is that of Phosphate import ATP-binding protein PstB from Tropheryma whipplei (strain Twist) (Whipple's bacillus).